A 247-amino-acid chain; its full sequence is UDP-2,3-diacylglucosamine hydrolase (247 aa).

5 residues coordinate Mn(2+): aspartate 8, histidine 10, aspartate 41, asparagine 79, and histidine 114. Substrate is bound at residue 79–80 (NR). 5 residues coordinate substrate: aspartate 122, serine 160, aspartate 171, glutamine 174, and histidine 202. Mn(2+)-binding residues include histidine 202 and histidine 204.

This sequence belongs to the LpxH family. Mn(2+) serves as cofactor.

It localises to the cell inner membrane. It catalyses the reaction UDP-2-N,3-O-bis[(3R)-3-hydroxytetradecanoyl]-alpha-D-glucosamine + H2O = 2-N,3-O-bis[(3R)-3-hydroxytetradecanoyl]-alpha-D-glucosaminyl 1-phosphate + UMP + 2 H(+). It functions in the pathway glycolipid biosynthesis; lipid IV(A) biosynthesis; lipid IV(A) from (3R)-3-hydroxytetradecanoyl-[acyl-carrier-protein] and UDP-N-acetyl-alpha-D-glucosamine: step 4/6. In terms of biological role, hydrolyzes the pyrophosphate bond of UDP-2,3-diacylglucosamine to yield 2,3-diacylglucosamine 1-phosphate (lipid X) and UMP by catalyzing the attack of water at the alpha-P atom. Involved in the biosynthesis of lipid A, a phosphorylated glycolipid that anchors the lipopolysaccharide to the outer membrane of the cell. The protein is UDP-2,3-diacylglucosamine hydrolase of Xanthomonas campestris pv. campestris (strain B100).